Reading from the N-terminus, the 469-residue chain is 3-isopropylmalate dehydratase large subunit (469 aa).

Cys350, Cys410, and Cys413 together coordinate [4Fe-4S] cluster.

Belongs to the aconitase/IPM isomerase family. LeuC type 1 subfamily. Heterodimer of LeuC and LeuD. It depends on [4Fe-4S] cluster as a cofactor.

The catalysed reaction is (2R,3S)-3-isopropylmalate = (2S)-2-isopropylmalate. Its pathway is amino-acid biosynthesis; L-leucine biosynthesis; L-leucine from 3-methyl-2-oxobutanoate: step 2/4. Its function is as follows. Catalyzes the isomerization between 2-isopropylmalate and 3-isopropylmalate, via the formation of 2-isopropylmaleate. This chain is 3-isopropylmalate dehydratase large subunit, found in Rhizobium meliloti (strain 1021) (Ensifer meliloti).